The chain runs to 277 residues: MDAPSSASGPTQPRLSPADALAALRASAPLTQCITNYVAMQIAANTLLAAGAAPAMIHTVEESGAFAGLARAVTINIGTLSPAWVDGMKAAIDGATAVGTPWVLDPVAHYASAYRSAVARDLLSRRPTILRGNASEILALAGGNTAARGVDAADPVTAAGAAASALAREYGSVVAVTGAVDLVTDGTRVAMVSGGSPWMPQVTALGCSLTCLMGAFAAVTAPLEATVAALTLFAEAGARAHAHSEGPGSFAWRFLDALAAVTPDDLTGTERVSWNAP.

M56 is a binding site for substrate. ATP is bound by residues R131 and T177. A204 serves as a coordination point for substrate.

Belongs to the Thz kinase family. Mg(2+) is required as a cofactor.

It carries out the reaction 5-(2-hydroxyethyl)-4-methylthiazole + ATP = 4-methyl-5-(2-phosphooxyethyl)-thiazole + ADP + H(+). It functions in the pathway cofactor biosynthesis; thiamine diphosphate biosynthesis; 4-methyl-5-(2-phosphoethyl)-thiazole from 5-(2-hydroxyethyl)-4-methylthiazole: step 1/1. Its function is as follows. Catalyzes the phosphorylation of the hydroxyl group of 4-methyl-5-beta-hydroxyethylthiazole (THZ). This Gemmatimonas aurantiaca (strain DSM 14586 / JCM 11422 / NBRC 100505 / T-27) protein is Hydroxyethylthiazole kinase.